The following is a 356-amino-acid chain: Cyclin-A1-4 (356 aa).

The protein belongs to the cyclin family. Cyclin AB subfamily.

In Oryza sativa subsp. japonica (Rice), this protein is Cyclin-A1-4 (CYCA1-4).